We begin with the raw amino-acid sequence, 374 residues long: N5-carboxyaminoimidazole ribonucleotide synthase (374 aa).

Residues R108, K148, 153 to 159 (GYDGKGQ), 183 to 186 (EKYL), E191, H214, and 266 to 267 (NE) contribute to the ATP site. The ATP-grasp domain occupies 112 to 296 (KETLKSAGTK…QFDTHILAVT (185 aa)).

This sequence belongs to the PurK/PurT family. Homodimer.

The catalysed reaction is 5-amino-1-(5-phospho-beta-D-ribosyl)imidazole + hydrogencarbonate + ATP = 5-carboxyamino-1-(5-phospho-D-ribosyl)imidazole + ADP + phosphate + 2 H(+). It functions in the pathway purine metabolism; IMP biosynthesis via de novo pathway; 5-amino-1-(5-phospho-D-ribosyl)imidazole-4-carboxylate from 5-amino-1-(5-phospho-D-ribosyl)imidazole (N5-CAIR route): step 1/2. Its function is as follows. Catalyzes the ATP-dependent conversion of 5-aminoimidazole ribonucleotide (AIR) and HCO(3)(-) to N5-carboxyaminoimidazole ribonucleotide (N5-CAIR). This Staphylococcus aureus (strain COL) protein is N5-carboxyaminoimidazole ribonucleotide synthase.